The primary structure comprises 741 residues: Copper-transporting ATPase (741 aa).

Positions 1-67 constitute an HMA domain; the sequence is MKESFYIEGM…LIEKLGYSPK (67 aa). The Cytoplasmic segment spans residues 1–83; the sequence is MKESFYIEGM…KKEFFSPNVK (83 aa). The Cu cation site is built by C12 and C15. A helical transmembrane segment spans residues 84-104; that stretch reads LALAVIFTLFVVYLSMGAMLS. Residues 105–124 are Extracellular-facing; that stretch reads PSLLPESLLTINNHSNFLNA. Residues 125–144 form a helical membrane-spanning segment; the sequence is CLQLIGTLIVMHLGRDFYIQ. Residues 145–151 lie on the Cytoplasmic side of the membrane; that stretch reads GFKALWH. A helical transmembrane segment spans residues 152–172; it reads RQPNMSSLIAIGTSAALISSL. At 173–190 the chain is on the extracellular side; it reads WQLYFVYTSQWSYGHYYF. A helical membrane pass occupies residues 191 to 211; sequence ESVCVILMFVMVGKRIENVSK. Residues 212–339 are Cytoplasmic-facing; sequence DKALDAMQAL…KAEISRLADK (128 aa). The helical transmembrane segment at 340 to 362 threads the bilayer; it reads VSSVFVPSVIAIAILAFVVWLII. Residues 363–375 are Extracellular-facing; sequence APKPDFWWNFGIA. Residues 376 to 393 form a helical membrane-spanning segment; the sequence is LEVFVSVLVISCPCALGL. Over 394-681 the chain is Cytoplasmic; it reads ATPMSILVAN…KLSQATIKNI (288 aa). D431 acts as the 4-aspartylphosphate intermediate in catalysis. D627 and D631 together coordinate Mg(2+). A helical transmembrane segment spans residues 682–701; that stretch reads KENLFWAFCYNSVFIPLACG. At 702-712 the chain is on the extracellular side; that stretch reads VLYKANIMLSP. A helical membrane pass occupies residues 713-731; sequence AIAGLAMSLSSVSVVLNSQ. Residues 732–741 are Cytoplasmic-facing; the sequence is RLRNFKIKDH.

The protein belongs to the cation transport ATPase (P-type) (TC 3.A.3) family. Type IB subfamily.

The protein resides in the cell membrane. The enzyme catalyses Cu(2+)(in) + ATP + H2O = Cu(2+)(out) + ADP + phosphate + H(+). Functionally, probably involved in copper export. This is Copper-transporting ATPase (copA) from Helicobacter pylori (Campylobacter pylori).